A 420-amino-acid chain; its full sequence is Pyrin and HIN domain-containing protein 1 (420 aa).

In terms of domain architecture, Pyrin spans 1-87 (MVNEYKRIVL…ANKLKNEKAK (87 aa)). 2 disordered regions span residues 82-201 (KNEK…SSSA) and 216-236 (RLKN…GSKK). Residues 87 to 102 (KAKRTRTGKRKTAAKR) are compositionally biased toward basic residues. Composition is skewed to polar residues over residues 108–118 (PSTSQPMSTTN) and 126–151 (GRST…AIQI). Positions 152–169 (SPTIASSSGQTSSRSSET) are enriched in low complexity. Over residues 170–201 (LQSIIQSPKTPKRPSSSILDPPVSSGTASSSA) the composition is skewed to polar residues. The region spanning 219–416 (NVPKEPSEEN…STTHSNMQVI (198 aa)) is the HIN-200 domain. Residues 220–229 (VPKEPSEENG) show a composition bias toward basic and acidic residues.

It belongs to the HIN-200 family.

The protein resides in the nucleus. The polypeptide is Pyrin and HIN domain-containing protein 1 (Mus musculus (Mouse)).